Reading from the N-terminus, the 214-residue chain is Peptidyl-tRNA hydrolase (214 aa).

Tyrosine 14 is a tRNA binding site. The Proton acceptor role is filled by histidine 19. TRNA-binding residues include tyrosine 64, asparagine 66, and asparagine 113. Positions 184-214 (RINAPPPKPEKKRGSETSDPSAESADHAGGG) are disordered.

Belongs to the PTH family. In terms of assembly, monomer.

The protein localises to the cytoplasm. It catalyses the reaction an N-acyl-L-alpha-aminoacyl-tRNA + H2O = an N-acyl-L-amino acid + a tRNA + H(+). In terms of biological role, hydrolyzes ribosome-free peptidyl-tRNAs (with 1 or more amino acids incorporated), which drop off the ribosome during protein synthesis, or as a result of ribosome stalling. Functionally, catalyzes the release of premature peptidyl moieties from peptidyl-tRNA molecules trapped in stalled 50S ribosomal subunits, and thus maintains levels of free tRNAs and 50S ribosomes. In Roseiflexus castenholzii (strain DSM 13941 / HLO8), this protein is Peptidyl-tRNA hydrolase.